The following is a 92-amino-acid chain: Conotoxin Mr15.3 (92 aa).

An N-terminal signal peptide occupies residues 1 to 20 (MSTLKMMLLILLLLLPMATF). Positions 21–53 (DSDGQAIPGGGIPSAVNSRVRGDEKSGRSLEKR) are excised as a propeptide.

The protein belongs to the conotoxin N superfamily. Post-translationally, contains 4 disulfide bonds. As to expression, expressed by the venom duct.

It is found in the secreted. In Conus marmoreus (Marble cone), this protein is Conotoxin Mr15.3.